Reading from the N-terminus, the 617-residue chain is uncharacterized protein (617 aa).

A helical transmembrane segment spans residues 103-123; that stretch reads AGVLLAKFFPLLFLYPLTYLA. The 410-residue stretch at 200–609 folds into the Protein kinase domain; that stretch reads FETREPVGSG…DILEAAKPFL (410 aa). Residues 206–214 and K302 each bind ATP; that span reads VGSGCVAQV. The Proton acceptor role is filled by D436.

It belongs to the protein kinase superfamily. ADCK protein kinase family.

It localises to the mitochondrion. It is found in the membrane. Its function is as follows. The function of this protein is not yet clear. It is not known if it has protein kinase activity and what type of substrate it would phosphorylate (Ser, Thr or Tyr). Involved in the mitochondrial import of CoQ precursors, plays a role in muscle mitochondrial function and fatty acid beta-oxidation. This is an uncharacterized protein from Mus musculus (Mouse).